The sequence spans 454 residues: Exodeoxyribonuclease 7 large subunit (454 aa).

Over residues 337–352 (ANQRQQRASQRLRQQN) the composition is skewed to low complexity. Positions 337-359 (ANQRQQRASQRLRQQNPQPRIHR) are disordered.

It belongs to the XseA family. In terms of assembly, heterooligomer composed of large and small subunits.

The protein localises to the cytoplasm. It carries out the reaction Exonucleolytic cleavage in either 5'- to 3'- or 3'- to 5'-direction to yield nucleoside 5'-phosphates.. Functionally, bidirectionally degrades single-stranded DNA into large acid-insoluble oligonucleotides, which are then degraded further into small acid-soluble oligonucleotides. This Salmonella arizonae (strain ATCC BAA-731 / CDC346-86 / RSK2980) protein is Exodeoxyribonuclease 7 large subunit.